The primary structure comprises 443 residues: MESLAALYKNHIVTLQERTRDVLARFKLDALLIHSGELFNVFLDDHPYPFKVNPQFKAWVPVTQVPNCWLLVDGVNKPKLWFYLPVDYWHNVEPLPTSFWTEEIEVVALPKADGIGSQLPVARGNIGYIGSAPERALQLDIAANNINPKGVIDYLHYYRAYKTDYELACMREAQKMAVSGHHAAEEAFRSGMSEFDINLAYLTATGHRDTDVPYSNIVALNEHAAVLHYTKLDHQAPSEMRSFLLDAGAEYNGYAADLTRTWSAKNDNDYAQLVKDVNDEQLALIATMKAGISYVDYHIQFHQRIAKLLRKHQIITDMSEEAMVENDLTGPFMPHGIGHPLGLQVHDVAGFMQDDSGTHLAAPSKYPYLRCTRVLQPRMVLTIEPGIYFIESLLAPWREGPFSKHFNWQKIEALKPFGGIRIEDNVVIHENGVENMTRDLKLA.

The Mn(2+) site is built by D246, D257, H339, E384, and E423.

This sequence belongs to the peptidase M24B family. Bacterial-type prolidase subfamily. The cofactor is Mn(2+).

The catalysed reaction is Xaa-L-Pro dipeptide + H2O = an L-alpha-amino acid + L-proline. Its function is as follows. Splits dipeptides with a prolyl residue in the C-terminal position. This is Xaa-Pro dipeptidase from Salmonella arizonae (strain ATCC BAA-731 / CDC346-86 / RSK2980).